Reading from the N-terminus, the 346-residue chain is D-alanine--D-alanine ligase (346 aa).

The ATP-grasp domain maps to 133 to 324 (KLYAQSVGVK…IVDNLAKNIE (192 aa)). 159 to 211 (LSFPCILKPARLGSSIGISIVKDESELKYAKDVAFEFDEDVVVEQFVSNIKEY) is a binding site for ATP. Residues D284, E296, and N298 each coordinate Mg(2+).

This sequence belongs to the D-alanine--D-alanine ligase family. Mg(2+) is required as a cofactor. The cofactor is Mn(2+).

It localises to the cytoplasm. It carries out the reaction 2 D-alanine + ATP = D-alanyl-D-alanine + ADP + phosphate + H(+). The protein operates within cell wall biogenesis; peptidoglycan biosynthesis. In terms of biological role, cell wall formation. The polypeptide is D-alanine--D-alanine ligase (Campylobacter lari (strain RM2100 / D67 / ATCC BAA-1060)).